A 758-amino-acid polypeptide reads, in one-letter code: MAPAMQPAEIQFAQRLASSEKGIRDRAVKKLRQYISVKTQRETGGFSQEELLKIWKGLFYCMWVQDEPLLQEELANTIAQLVHAVNNSAAQHLFIQTFWQTMNREWKGIDRLRLDKYYMLIRLVLRQSFEVLKRNGWEESRIKVFLDVLMKEVLCPESQSPNGVRFHFIDIYLDELSKVGGKELLADQNLKFIDPFCKIAAKTKDHTLVQTIARGVFEAIVDQSPFVPEETMEEQKTKVGDGDLSAEEIPENEVSLRRAVSKKKTALGKNHSRKDGLSDERGRDDCGTFEDTGPLLQFDYKAVADRLLEMTSRKNTPHFNRKRLSKLIKKFQDLSEGSSISQLSFAEDISADEDDQILSQGKHKKKGNKLLEKTNLEKEKGSRVFCVEEEDSESSLQKRRRKKKKKHHLQPENPGPGGAAPSLEQNRGREPEASGLKALKARVAEPGAEATSSTGEESGSEHPPAVPMHNKRKRPRKKSPRAHREMLESAVLPPEDMSQSGPSGSHPQGPRGSPTGGAQLLKRKRKLGVVPVNGSGLSTPAWPPLQQEGPPTGPAEGANSHTTLPQRRRLQKKKAGPGSLELCGLPSQKTASLKKRKKMRVMSNLVEHNGVLESEAGQPQALGSSGTCSSLKKQKLRAESDFVKFDTPFLPKPLFFRRAKSSTATHPPGPAVQLNKTPSSSKKVTFGLNRNMTAEFKKTDKSILVSPTGPSRVAFDPEQKPLHGVLKTPTSSPASSPLVAKKPLTTTPRRRPRAMDFF.

Residue serine 245 is modified to Phosphoserine. The span at 259-272 shows a compositional bias: basic residues; that stretch reads AVSKKKTALGKNHS. A disordered region spans residues 259–285; that stretch reads AVSKKKTALGKNHSRKDGLSDERGRDD. The span at 273–285 shows a compositional bias: basic and acidic residues; that stretch reads RKDGLSDERGRDD. Phosphoserine occurs at positions 350, 392, 394, and 395. The segment at 381–598 is disordered; that stretch reads GSRVFCVEEE…KTASLKKRKK (218 aa). A compositionally biased stretch (basic residues) spans 397-408; sequence QKRRRKKKKKHH. A compositionally biased stretch (low complexity) spans 447–457; the sequence is GAEATSSTGEE. Residues serine 452 and serine 458 each carry the phosphoserine modification. Over residues 469–481 the composition is skewed to basic residues; the sequence is HNKRKRPRKKSPR. The span at 498–513 shows a compositional bias: low complexity; it reads SQSGPSGSHPQGPRGS. Serine 513 is subject to Phosphoserine. Basic residues predominate over residues 566–575; it reads QRRRLQKKKA. Position 579 is a phosphoserine (serine 579). N6-acetyllysine is present on lysine 652. Residues 660-681 are disordered; sequence KSSTATHPPGPAVQLNKTPSSS. A phosphoserine mark is found at serine 702 and serine 706. Residues 707–758 form a disordered region; sequence PTGPSRVAFDPEQKPLHGVLKTPTSSPASSPLVAKKPLTTTPRRRPRAMDFF. Arginine 712 is subject to Citrulline. The residue at position 728 (threonine 728) is a Phosphothreonine. Phosphoserine is present on residues serine 732, serine 735, and serine 736.

This sequence belongs to the RRP1 family. Interacts with the transcriptional activator E2F1. Interacts with serine/threonine-protein phosphatase PP1 subunits PPP1CB and PPP1CC but not with PPP1CA. Interacts with 60S ribosomal proteins RPL5 and RPL27, ribosomal processing protein RRP1/NNP1 and other nucleolar proteins including NOP2/NOL1 and FBL. Also interacts with nucleolar protein NPM1/B23. Interacts with splicing factor SRSF1 and with LUC7L3/CROP. Interacts with GTPase activator SIPA1. Interacts with CBX5/HP1alpha, H1-10, NCL, PARP1, TRIM28 and YBX3. In terms of assembly, (Microbial infection) Interacts with influenza A virus nucleoprotein NP and with RNA-directed RNA polymerase subunits PB1 and PB2. In terms of processing, citrullinated by PADI4.

The protein resides in the nucleus. It localises to the nucleolus. Its subcellular location is the nucleoplasm. It is found in the chromosome. Its function is as follows. Positively regulates DNA damage-induced apoptosis by acting as a transcriptional coactivator of proapoptotic target genes of the transcriptional activator E2F1. Likely to play a role in ribosome biogenesis by targeting serine/threonine protein phosphatase PP1 to the nucleolus. Involved in regulation of mRNA splicing. Inhibits SIPA1 GTPase activity. Involved in regulating expression of extracellular matrix genes. Associates with chromatin and may play a role in modulating chromatin structure. Functionally, (Microbial infection) Following influenza A virus (IAV) infection, promotes viral mRNA transcription by facilitating the binding of IAV RNA-directed RNA polymerase to capped mRNA. This Homo sapiens (Human) protein is Ribosomal RNA processing protein 1 homolog B (RRP1B).